We begin with the raw amino-acid sequence, 514 residues long: 2,3-bisphosphoglycerate-independent phosphoglycerate mutase (514 aa).

2 residues coordinate Mn(2+): D14 and S64. The active-site Phosphoserine intermediate is S64. Residues H125, 155-156 (RD), R187, R193, 263-266 (RADR), and K336 contribute to the substrate site. Mn(2+) is bound by residues D403, H407, D444, H445, and H463.

Belongs to the BPG-independent phosphoglycerate mutase family. As to quaternary structure, monomer. Requires Mn(2+) as cofactor.

The enzyme catalyses (2R)-2-phosphoglycerate = (2R)-3-phosphoglycerate. The protein operates within carbohydrate degradation; glycolysis; pyruvate from D-glyceraldehyde 3-phosphate: step 3/5. Catalyzes the interconversion of 2-phosphoglycerate and 3-phosphoglycerate. This chain is 2,3-bisphosphoglycerate-independent phosphoglycerate mutase, found in Salmonella choleraesuis (strain SC-B67).